Consider the following 331-residue polypeptide: Phosphate acyltransferase (331 aa).

It belongs to the PlsX family. As to quaternary structure, homodimer. Probably interacts with PlsY.

The protein localises to the cytoplasm. The catalysed reaction is a fatty acyl-[ACP] + phosphate = an acyl phosphate + holo-[ACP]. Its pathway is lipid metabolism; phospholipid metabolism. Functionally, catalyzes the reversible formation of acyl-phosphate (acyl-PO(4)) from acyl-[acyl-carrier-protein] (acyl-ACP). This enzyme utilizes acyl-ACP as fatty acyl donor, but not acyl-CoA. This is Phosphate acyltransferase from Mesoplasma florum (strain ATCC 33453 / NBRC 100688 / NCTC 11704 / L1) (Acholeplasma florum).